A 364-amino-acid chain; its full sequence is Nucleoporin SEH1 (364 aa).

6 WD repeats span residues 10-49 (DHKDLIHDVSYDFHGRRMATCSSDQSVKVWDKGDDGEWHC), 55-96 (THSG…SNDK), 111-152 (DSRT…NLSQ), 160-210 (SCKL…RKYA), 217-258 (TVTD…RESA), and 276-315 (SHNSQVWRVSWNITSTLLASSGDDGCVRLWKANYMDNWKC).

It belongs to the WD repeat SEC13 family. As to quaternary structure, component of the Nup107-160 subcomplex of the nuclear pore complex (NPC). The Nup107-160 subcomplex includes NUP160, NUP133, NUP107, NUP98, NUP85, NUP43, NUP37, SEH1 and SEC13. Component of the GATOR2 subcomplex, composed of MIOS, SEC13, SEH1L, WDR24 and WDR59. The GATOR2 complex interacts with CASTOR1 and CASTOR2; the interaction is negatively regulated by arginine. The GATOR2 complex interacts with SESN1, SESN2 and SESN3; the interaction is negatively regulated by amino acids.

The protein resides in the chromosome. The protein localises to the centromere. It is found in the kinetochore. It localises to the nucleus. Its subcellular location is the nuclear pore complex. The protein resides in the lysosome membrane. Its activity is regulated as follows. The GATOR2 complex is negatively regulated by the upstream amino acid sensors CASTOR1 and SESN2, which sequester the GATOR2 complex in absence of amino acids. In the presence of abundant amino acids, GATOR2 is released from CASTOR1 and SESN2 and activated. Component of the Nup107-160 subcomplex of the nuclear pore complex (NPC). The Nup107-160 subcomplex is required for the assembly of a functional NPC. The Nup107-160 subcomplex is also required for normal kinetochore microtubule attachment, mitotic progression and chromosome segregation. This subunit plays a role in recruitment of the Nup107-160 subcomplex to the kinetochore. In terms of biological role, as a component of the GATOR2 complex, functions as an activator of the amino acid-sensing branch of the mTORC1 signaling pathway. The GATOR2 complex indirectly activates mTORC1 through the inhibition of the GATOR1 subcomplex. GATOR2 probably acts as an E3 ubiquitin-protein ligase toward GATOR1. In the presence of abundant amino acids, the GATOR2 complex mediates ubiquitination of the NPRL2 core component of the GATOR1 complex, leading to GATOR1 inactivation. In the absence of amino acids, GATOR2 is inhibited, activating the GATOR1 complex. This is Nucleoporin SEH1 (seh1l) from Danio rerio (Zebrafish).